The sequence spans 917 residues: MPGPSPGLRRALLGLWAALGLGILGISAVALEPFWADLQPRVALVERGGSLWLNCSTNCPRPERGGLETSLRRNGTQRGLRWLARQLVDIREPETQPVCFFRCARRTLQARGLIRTFQRPDRVELVPLPSWQPVGENFTLSCRVPGAGPRASLTLTLLRGGQELIRRSFVGEPPRARGAMLTARVLARREDHRVNFSCLAELDLRPHGLGLFANSSAPRQLRTFAMPPHSPSLIAPRVLEVDSERPVTCTLDGLFPAPEAGVYLSLGDQRLNPNVTLDGDSLVATATATASAEQEGTKQLMCVVTLGGESRETQENLTVYSFPTPLLTLSEPEAPEGKMVTISCWAGARALVTLEGIPAAVPGQPAELQLNVTKNDDKRGFFCDAALDVDGETLRKNQSSELRVLYAPRLDDLDCPRSWTWPEGPEQTLHCEARGNPEPSVHCARPEGGAVLALGLLGPVTRALAGTYRCTAVNGQGQAVKDVTLTVEYAPALDSVGCPEHITWLEGTEASLSCVAHGVPPPSVSCVRSGKEEVMEGPLRVAREHAGTYRCEAINARGSAAKNVAVTVEYGPSFEELGCPSNWTWVEGSGKLFSCEVDGKPEPRVECVGSEGASEGIVLPLVSSNSGPRNSMTPGNLSPGIYLCNATNRHGSTVKTVVVSAESPPQMDESSCPSHQTWLEGAEATALACSARGRPSPRVHCSREGAARLERLQVSREDAGTYRCVATNAHGTDSRTVTVGVEYRPVVAELAASPPSVRPGGNFTLTCRAEAWPPAQISWRAPPGALNLGLSSNNSTLSVAGAMGSHGGEYECAATNAHGRHARRITVRVAGPWLWVAVGGAAGGAALLAAGAGLAFYVQSTACKKGEYNVQEAESSGEAVCLNGAGGTPGAEGGAETPGTAESPADGEVFAIQLTSS.

A signal peptide spans 1–31; it reads MPGPSPGLRRALLGLWAALGLGILGISAVAL. Residues 32 to 833 lie on the Extracellular side of the membrane; the sequence is EPFWADLQPR…RITVRVAGPW (802 aa). 9 consecutive Ig-like C2-type domains span residues 48 to 130, 135 to 235, 242 to 329, 337 to 402, 408 to 486, 491 to 567, 572 to 651, 665 to 738, and 745 to 828; these read GGSL…PLPS, GENF…SLIA, DSER…LLTL, GKMV…SSEL, PRLD…VTLT, PALD…VAVT, PSFE…NRHG, PQMD…RTVT, and PVVA…ITVR. N-linked (GlcNAc...) (high mannose) asparagine glycosylation is present at asparagine 54. Disulfide bonds link cysteine 55-cysteine 99 and cysteine 59-cysteine 103. Asparagine 74 and asparagine 137 each carry an N-linked (GlcNAc...) asparagine glycan. Cysteine 142 and cysteine 198 are oxidised to a cystine. Phosphothreonine is present on threonine 182. N-linked (GlcNAc...) asparagine glycans are attached at residues asparagine 195, asparagine 214, asparagine 274, asparagine 316, asparagine 371, and asparagine 397. Cysteine 249 and cysteine 302 are oxidised to a cystine. A disulfide bridge links cysteine 344 with cysteine 383. 3 disulfide bridges follow: cysteine 415-cysteine 470, cysteine 498-cysteine 551, and cysteine 579-cysteine 644. N-linked (GlcNAc...) asparagine glycosylation is found at asparagine 582 and asparagine 645. Residues cysteine 672 and cysteine 724 are joined by a disulfide bond. 3 N-linked (GlcNAc...) asparagine glycosylation sites follow: asparagine 762, asparagine 793, and asparagine 794. Cysteine 767 and cysteine 812 are oxidised to a cystine. A helical transmembrane segment spans residues 834 to 854; that stretch reads LWVAVGGAAGGAALLAAGAGL. The Cytoplasmic segment spans residues 855 to 917; sequence AFYVQSTACK…EVFAIQLTSS (63 aa). Positions 884–893 are enriched in gly residues; that stretch reads GAGGTPGAEG. The tract at residues 884–908 is disordered; sequence GAGGTPGAEGGAETPGTAESPADGE.

The protein belongs to the immunoglobulin superfamily. ICAM family. Glycosylation at Asn-54 is critical for functional folding. Expressed on neurons in the most rostral segment of the mammalian brain, the telencephalon.

It is found in the membrane. Its function is as follows. ICAM proteins are ligands for the leukocyte adhesion protein LFA-1 (integrin alpha-L/beta-2). This is Intercellular adhesion molecule 5 (Icam5) from Mus musculus (Mouse).